Reading from the N-terminus, the 393-residue chain is NAD(P)H-quinone oxidoreductase subunit H, chloroplastic (393 aa).

The protein belongs to the complex I 49 kDa subunit family. In terms of assembly, NDH is composed of at least 16 different subunits, 5 of which are encoded in the nucleus.

It localises to the plastid. It is found in the chloroplast thylakoid membrane. It carries out the reaction a plastoquinone + NADH + (n+1) H(+)(in) = a plastoquinol + NAD(+) + n H(+)(out). The enzyme catalyses a plastoquinone + NADPH + (n+1) H(+)(in) = a plastoquinol + NADP(+) + n H(+)(out). In terms of biological role, NDH shuttles electrons from NAD(P)H:plastoquinone, via FMN and iron-sulfur (Fe-S) centers, to quinones in the photosynthetic chain and possibly in a chloroplast respiratory chain. The immediate electron acceptor for the enzyme in this species is believed to be plastoquinone. Couples the redox reaction to proton translocation, and thus conserves the redox energy in a proton gradient. This is NAD(P)H-quinone oxidoreductase subunit H, chloroplastic from Ceratophyllum demersum (Rigid hornwort).